A 510-amino-acid polypeptide reads, in one-letter code: MDEFQRXSNKHXXWQQLFLXPLFFREDLXAIGHDHHLDRSGSSEPTEIFFSHFFSFLTVKRSIRRIRKQNKSISLFGNSDSNKLIEYNKNFSFKSMLEGFTIVLEVSIAMRSKHFIKGMDGWNXLRSIHCIFPFMEDKLPHSNYISDIRVPYSIHPEILVRIFRRWIRDVPSLHLLRLILHEWKNSFSQENLEKXXLITQRGNTRFSLFLWNSYVYECESFLIPLIKRFFNPXSLLYGSFPDGIHXEKKIKDIVIFLLQKISTKKIWLLKDSFIHYVRYGERSLIALKGTHLQVKKCRYHLFHFWQYYFHLWFQPYRICSLELSKTSFSFLGFFLNVKMRPLVVRAKMLDDLFITDLITNELNPIAPIRSILFSLAKEKFCDISGWPISKLSWTSLSDDDILDRFDRIWINLFHYYSGSINQDGLYHIKYILLLSCAKTLACKHKSTIRVVREQLGSELFTNSFSKEREFISSSFSKTRSQRERIWNSEISQRNPLXXFWQKMENKQIEN.

This sequence belongs to the intron maturase 2 family. MatK subfamily.

It localises to the plastid. It is found in the chloroplast. In terms of biological role, usually encoded in the trnK tRNA gene intron. Probably assists in splicing its own and other chloroplast group II introns. In Thuja plicata (Western red-cedar), this protein is Maturase K.